Here is a 101-residue protein sequence, read N- to C-terminus: Signal recognition particle 19 kDa protein (101 aa).

This sequence belongs to the SRP19 family. As to quaternary structure, part of the signal recognition particle protein translocation system, which is composed of SRP and FtsY. Archaeal SRP consists of a 7S RNA molecule of 300 nucleotides and two protein subunits: SRP54 and SRP19.

It localises to the cytoplasm. Its function is as follows. Involved in targeting and insertion of nascent membrane proteins into the cytoplasmic membrane. Binds directly to 7S RNA and mediates binding of the 54 kDa subunit of the SRP. The chain is Signal recognition particle 19 kDa protein from Thermofilum pendens (strain DSM 2475 / Hrk 5).